The following is a 566-amino-acid chain: Membrane protein insertase YidC (566 aa).

The next 5 membrane-spanning stretches (helical) occupy residues 3–23 (IKRI…FNAW), 346–366 (GWLW…HAVV), 369–389 (WGWS…WFSA), 436–456 (GGCL…YVII), and 509–529 (MWIL…GLVL).

The protein belongs to the OXA1/ALB3/YidC family. Type 1 subfamily. As to quaternary structure, interacts with the Sec translocase complex via SecD. Specifically interacts with transmembrane segments of nascent integral membrane proteins during membrane integration.

It localises to the cell inner membrane. Functionally, required for the insertion and/or proper folding and/or complex formation of integral membrane proteins into the membrane. Involved in integration of membrane proteins that insert both dependently and independently of the Sec translocase complex, as well as at least some lipoproteins. Aids folding of multispanning membrane proteins. This Coxiella burnetii (strain CbuK_Q154) (Coxiella burnetii (strain Q154)) protein is Membrane protein insertase YidC.